A 184-amino-acid polypeptide reads, in one-letter code: Putative tetraheme cytochrome-c type (184 aa).

Topologically, residues 1 to 14 are cytoplasmic; that stretch reads MSKHAASSAKRFSL. Residues 15-35 traverse the membrane as a helical segment; sequence LALGLMFVGGIVFVWAVDFGI. Topologically, residues 36 to 184 are periplasmic; the sequence is KTTNTLEFCT…HEPTEPDDAS (149 aa). The heme site is built by Cys-44, Cys-47, Met-50, Cys-73, Cys-76, and His-77. Lys-89 and Asp-95 together coordinate substrate. Positions 95, 133, 136, 137, 165, 168, 169, and 174 each coordinate heme.

It belongs to the NapC/NirT/NrfH family. Binds 4 heme groups per subunit.

The protein resides in the cell inner membrane. In Allochromatium vinosum (strain ATCC 17899 / DSM 180 / NBRC 103801 / NCIMB 10441 / D) (Chromatium vinosum), this protein is Putative tetraheme cytochrome-c type.